Consider the following 527-residue polypeptide: Bifunctional purine biosynthesis protein PurH (527 aa).

One can recognise an MGS-like domain in the interval 1–149; it reads MASDFLPVRR…KNFARVAVAT (149 aa).

Belongs to the PurH family.

The enzyme catalyses (6R)-10-formyltetrahydrofolate + 5-amino-1-(5-phospho-beta-D-ribosyl)imidazole-4-carboxamide = 5-formamido-1-(5-phospho-D-ribosyl)imidazole-4-carboxamide + (6S)-5,6,7,8-tetrahydrofolate. It catalyses the reaction IMP + H2O = 5-formamido-1-(5-phospho-D-ribosyl)imidazole-4-carboxamide. The protein operates within purine metabolism; IMP biosynthesis via de novo pathway; 5-formamido-1-(5-phospho-D-ribosyl)imidazole-4-carboxamide from 5-amino-1-(5-phospho-D-ribosyl)imidazole-4-carboxamide (10-formyl THF route): step 1/1. It participates in purine metabolism; IMP biosynthesis via de novo pathway; IMP from 5-formamido-1-(5-phospho-D-ribosyl)imidazole-4-carboxamide: step 1/1. The protein is Bifunctional purine biosynthesis protein PurH of Xanthomonas campestris pv. campestris (strain 8004).